Here is a 296-residue protein sequence, read N- to C-terminus: Phosphatidylglycerol--prolipoprotein diacylglyceryl transferase (296 aa).

4 helical membrane-spanning segments follow: residues 10 to 30 (IAFS…LAAF), 57 to 77 (LLFY…MLFY), 92 to 112 (VWEG…ACWL), and 119 to 139 (LHFF…LGFG). Residue Arg-140 participates in a 1,2-diacyl-sn-glycero-3-phospho-(1'-sn-glycerol) binding. Transmembrane regions (helical) follow at residues 194 to 214 (QLYE…TFSM), 220 to 240 (YAVS…VEFV), and 254 to 274 (WLTM…VLLA).

Belongs to the Lgt family.

Its subcellular location is the cell inner membrane. It carries out the reaction L-cysteinyl-[prolipoprotein] + a 1,2-diacyl-sn-glycero-3-phospho-(1'-sn-glycerol) = an S-1,2-diacyl-sn-glyceryl-L-cysteinyl-[prolipoprotein] + sn-glycerol 1-phosphate + H(+). It functions in the pathway protein modification; lipoprotein biosynthesis (diacylglyceryl transfer). Catalyzes the transfer of the diacylglyceryl group from phosphatidylglycerol to the sulfhydryl group of the N-terminal cysteine of a prolipoprotein, the first step in the formation of mature lipoproteins. This Xanthomonas euvesicatoria pv. vesicatoria (strain 85-10) (Xanthomonas campestris pv. vesicatoria) protein is Phosphatidylglycerol--prolipoprotein diacylglyceryl transferase.